Reading from the N-terminus, the 538-residue chain is MSKGIKNSQLKKKNVKASNVAEKIEEKVEKTDKVVEKAAEVTEKRIRNLKLQEKVVTADVAADMIENGMIVAISGFTPSGYPKEVPKALTKKVNALEEEFKVTLYTGSSTGADIDGEWAKAGIIERRIPYQTNSDMRKKINDGSIKYADMHLSHMAQYINYSVIPKVDIAIIEAVAITEEGDIIPSTGIGNTATFVENADKVIVEINEAQPLELEGMADIYTLKNPPRREPIPIVNAGNRIGTTYVTCGSEKICAIVMTNTQDKTRPLTEVSPVSQAISDNLIGFLNKEVEEGKLPKNLLPIQSGVGSVANAVLAGLCESNFKNLSCYTEVIQDSMLKLIKCGKADVVSGTSISPSPEMLPEFIKDINFFREKIVLRPQEISNNPEIARRIGVISINTALEVDIYGNVNSTHVMGSKMMNGIGGSGDFARNAYLTIFTTESIAKKGDISSIVPMVSHVDHTEHDVMVIVTEQGVADLRGLSPREKAVAIIENCVHPDYKDMLMEYFEEACKSSGGNTPHNLEKALSWHTKFIKTGSMK.

305–309 (GVGSV) contributes to the CoA binding site. Residue glutamate 330 is the 5-glutamyl coenzyme A thioester intermediate of the active site. CoA is bound by residues asparagine 420 and glycine 424.

Belongs to the acetyl-CoA hydrolase/transferase family.

It carries out the reaction succinyl-CoA + acetate = succinate + acetyl-CoA. Its function is as follows. Forms succinyl-CoA from succinate and acetyl-CoA. The polypeptide is Succinyl-CoA:acetate CoA-transferase (Clostridium kluyveri (strain ATCC 8527 / DSM 555 / NBRC 12016 / NCIMB 10680 / K1)).